We begin with the raw amino-acid sequence, 215 residues long: Nucleoredoxin-like protein 1 (215 aa).

Residues 1 to 165 (MADLFLDKIL…VSEIIDRSFL (165 aa)) form the Thioredoxin; atypical domain. A compositionally biased stretch (basic and acidic residues) spans 185 to 194 (IKYKDETTNE). Positions 185-215 (IKYKDETTNEKKKRKHCDDEDEGGGGGTEFF) are disordered.

It belongs to the nucleoredoxin family.

The protein resides in the cell projection. The protein localises to the cilium. Its subcellular location is the photoreceptor outer segment. Functionally, plays an important role in retinal cone photoreceptor survival. May play a role in cone cell viability, slowing down cone degeneration, does not seem to play a role in degenerating rods. In Xenopus laevis (African clawed frog), this protein is Nucleoredoxin-like protein 1 (nxnl1).